Here is a 3601-residue protein sequence, read N- to C-terminus: Protein SPIRRIG (3601 aa).

Disordered regions lie at residues 17-50, 398-426, 449-476, 638-657, 1954-1993, 2009-2049, and 2715-2747; these read AQSS…PSSS, SSNH…ADFS, PAEP…TSSV, QYSG…SFRK, HIND…SLGS, ENIL…DFQD, and TTHV…EKEL. The span at 32–50 shows a compositional bias: low complexity; the sequence is PPSSSSSSSSPSFTYPSSS. Polar residues-rich tracts occupy residues 416–426 and 458–476; these read NTNSTENADFS and SRSS…TSSV. Over residues 1974-1991 the composition is skewed to polar residues; that stretch reads STKTSISVGSFPQGQVSL. Residues 2027 to 2048 are compositionally biased toward basic and acidic residues; the sequence is EDVKKQDDHHVGPSASSERDFQ. Residues 2715-2731 show a composition bias toward polar residues; the sequence is TTHVKSETGSPRHSSSA. The span at 2732-2747 shows a compositional bias: basic and acidic residues; it reads KMDETNGREEKSEKEL. Residues 2760-2927 enclose the BEACH-type PH domain; it reads EHLEKIRFRY…EREEVFKNLV (168 aa). The region spanning 2952-3244 is the BEACH domain; the sequence is GGRLFKLMAK…QLFPKAHVKR (293 aa). 4 WD repeats span residues 3328–3367, 3378–3417, 3464–3507, and 3540–3579; these read HESN…PRGS, AHTA…FVRQ, PSDS…DPVS, and FHKQ…LRAS.

As to quaternary structure, interacts with DCP1. As to expression, expressed in flowers, leaves, stems, hypocotyls and roots.

The protein localises to the cytoplasm. It is found in the P-body. Involved in cell morphogenesis. May have a function in membrane fusion or membrane composition. Required for salt stress tolerance. Regulates the salt stress-dependent post-transcriptional stabilization, cytoplasmic agglomeration, and localization to P-bodies of a subset of salt stress-regulated mRNAs. This Arabidopsis thaliana (Mouse-ear cress) protein is Protein SPIRRIG.